Reading from the N-terminus, the 461-residue chain is Flavin-containing monooxygenase FMO GS-OX4 (461 aa).

Glycine 17–glycine 22 provides a ligand contact to FAD. Glycine 211–glycine 216 contributes to the NADP(+) binding site.

Belongs to the FMO family.

The enzyme catalyses a (Z)-omega-(methylsulfanyl)-N-sulfo-alkylhydroximate S-glucoside + NADPH + O2 + H(+) = a (Z)-omega-(methylsulfinyl)-alkyl-glucosinolate + NADP(+) + H2O. Catalyzes the conversion of methylthioalkyl glucosinolates of any chain length into methylsulfinylalkyl glucosinolates. This is Flavin-containing monooxygenase FMO GS-OX4 (FMOGS-OX4) from Arabidopsis thaliana (Mouse-ear cress).